Consider the following 215-residue polypeptide: MSKVYDWLDERLEITPFVDDATGKFIPPHVNIFYCLGGITLVCFLIQFATGFAMTFYYRPTVAEAFESVNYIMTQVNFGWLLRSIHRWSASMMVLMMILHTFRVYLTGGFKKPRELTWVTGVILAVLTVSFGVTGYSLPWDQVGYWAVKIVSGVPSAIPVVGDALVQLIRGGEAVGQATLTRFYSLHTFVLPWLTAVFMTMHFLMIRRQGISGPL.

The helical transmembrane segment at 32–52 (IFYCLGGITLVCFLIQFATGF) threads the bilayer. Residue cysteine 35 participates in heme c binding. 2 residues coordinate heme b: histidine 86 and histidine 100. A run of 3 helical transmembrane segments spans residues 90 to 110 (ASMMVLMMILHTFRVYLTGGF), 116 to 136 (LTWVTGVILAVLTVSFGVTGY), and 186 to 206 (LHTFVLPWLTAVFMTMHFLMI). Heme b contacts are provided by histidine 187 and histidine 202.

The protein belongs to the cytochrome b family. PetB subfamily. As to quaternary structure, the 4 large subunits of the cytochrome b6-f complex are cytochrome b6, subunit IV (17 kDa polypeptide, PetD), cytochrome f and the Rieske protein, while the 4 small subunits are PetG, PetL, PetM and PetN. The complex functions as a dimer. Heme b serves as cofactor. It depends on heme c as a cofactor.

Its subcellular location is the cellular thylakoid membrane. Functionally, component of the cytochrome b6-f complex, which mediates electron transfer between photosystem II (PSII) and photosystem I (PSI), cyclic electron flow around PSI, and state transitions. The sequence is that of Cytochrome b6 from Synechococcus sp. (strain JA-3-3Ab) (Cyanobacteria bacterium Yellowstone A-Prime).